A 431-amino-acid chain; its full sequence is Enolase (431 aa).

Gln167 serves as a coordination point for (2R)-2-phosphoglycerate. Glu209 (proton donor) is an active-site residue. 3 residues coordinate Mg(2+): Asp246, Glu289, and Asp316. (2R)-2-phosphoglycerate contacts are provided by Lys341, Arg370, Ser371, and Lys392. Lys341 serves as the catalytic Proton acceptor.

This sequence belongs to the enolase family. Component of the RNA degradosome, a multiprotein complex involved in RNA processing and mRNA degradation. Mg(2+) is required as a cofactor.

The protein localises to the cytoplasm. The protein resides in the secreted. It is found in the cell surface. The catalysed reaction is (2R)-2-phosphoglycerate = phosphoenolpyruvate + H2O. It participates in carbohydrate degradation; glycolysis; pyruvate from D-glyceraldehyde 3-phosphate: step 4/5. In terms of biological role, catalyzes the reversible conversion of 2-phosphoglycerate (2-PG) into phosphoenolpyruvate (PEP). It is essential for the degradation of carbohydrates via glycolysis. The polypeptide is Enolase (Shewanella sediminis (strain HAW-EB3)).